We begin with the raw amino-acid sequence, 379 residues long: Subtilisin Carlsberg (379 aa).

Residues Met1–Ala29 form the signal peptide. A propeptide spanning residues Ala30 to Leu105 is cleaved from the precursor. The 59-residue stretch at Phe44–Ala102 folds into the Inhibitor I9 domain. A Ca(2+)-binding site is contributed by Gln107. The Peptidase S8 domain maps to Pro110 to Ala378. Catalysis depends on Asp137, which acts as the Charge relay system. Asp146 lines the Ca(2+) pocket. His168 serves as the catalytic Charge relay system. Residues Leu179, Asn181, Thr183, Val185, Ala273, Tyr275, and Val278 each contribute to the Ca(2+) site. Ser325 (charge relay system) is an active-site residue.

Belongs to the peptidase S8 family. Ca(2+) is required as a cofactor.

It localises to the secreted. It carries out the reaction Hydrolysis of proteins with broad specificity for peptide bonds, and a preference for a large uncharged residue in P1. Hydrolyzes peptide amides.. With respect to regulation, inhibited by p-chlorophenyl and 1-naphthyl boronic acid derivatives. Functionally, subtilisin is an extracellular alkaline serine protease, it catalyzes the hydrolysis of proteins and peptide amides. Shows high specificity for aromatic and hydrophobic amino acids in the P1 substrate position. May play an important role in the degradation of feather keratin. This Bacillus licheniformis protein is Subtilisin Carlsberg.